The primary structure comprises 156 residues: Small ribosomal subunit protein uS7 (156 aa).

It belongs to the universal ribosomal protein uS7 family. Part of the 30S ribosomal subunit. Contacts proteins S9 and S11.

In terms of biological role, one of the primary rRNA binding proteins, it binds directly to 16S rRNA where it nucleates assembly of the head domain of the 30S subunit. Is located at the subunit interface close to the decoding center, probably blocks exit of the E-site tRNA. The sequence is that of Small ribosomal subunit protein uS7 from Bacillus pumilus (strain SAFR-032).